Consider the following 229-residue polypeptide: Peptidase E (229 aa).

Residues serine 120, aspartate 135, and histidine 157 each act as charge relay system in the active site.

It belongs to the peptidase S51 family.

It localises to the cytoplasm. It carries out the reaction Dipeptidase E catalyzes the hydrolysis of dipeptides Asp-|-Xaa. It does not act on peptides with N-terminal Glu, Asn or Gln, nor does it cleave isoaspartyl peptides.. Its function is as follows. Hydrolyzes dipeptides containing N-terminal aspartate residues. May play a role in allowing the cell to use peptide aspartate to spare carbon otherwise required for the synthesis of the aspartate family of amino acids. This Escherichia coli O6:K15:H31 (strain 536 / UPEC) protein is Peptidase E.